A 90-amino-acid chain; its full sequence is Electron transfer flavoprotein regulatory factor 1 (90 aa).

The protein belongs to the complex I LYR family. As to quaternary structure, homotetramer. Interacts with NDUFAB1. Interacts with ETFA. Interacts with ETFB.

It is found in the mitochondrion. In terms of biological role, acts as a regulator of the electron transfer flavoprotein by promoting the removal of flavin from the ETF holoenzyme (composed of ETFA and ETFB). The chain is Electron transfer flavoprotein regulatory factor 1 from Homo sapiens (Human).